A 157-amino-acid polypeptide reads, in one-letter code: D-aminoacyl-tRNA deacylase (157 aa).

A Gly-cisPro motif, important for rejection of L-amino acids motif is present at residues 137–138 (GP).

It belongs to the DTD family. In terms of assembly, homodimer.

It localises to the cytoplasm. The catalysed reaction is glycyl-tRNA(Ala) + H2O = tRNA(Ala) + glycine + H(+). It carries out the reaction a D-aminoacyl-tRNA + H2O = a tRNA + a D-alpha-amino acid + H(+). In terms of biological role, an aminoacyl-tRNA editing enzyme that deacylates mischarged D-aminoacyl-tRNAs. Also deacylates mischarged glycyl-tRNA(Ala), protecting cells against glycine mischarging by AlaRS. Acts via tRNA-based rather than protein-based catalysis; rejects L-amino acids rather than detecting D-amino acids in the active site. By recycling D-aminoacyl-tRNA to D-amino acids and free tRNA molecules, this enzyme counteracts the toxicity associated with the formation of D-aminoacyl-tRNA entities in vivo and helps enforce protein L-homochirality. The polypeptide is D-aminoacyl-tRNA deacylase (Cyanothece sp. (strain PCC 7425 / ATCC 29141)).